The following is a 311-amino-acid chain: Malate dehydrogenase (311 aa).

NAD(+)-binding positions include 7 to 13 (GAAGGIG) and Asp34. Substrate-binding residues include Arg81 and Arg87. Residues Asn94 and 117 to 119 (ITN) contribute to the NAD(+) site. Positions 119 and 153 each coordinate substrate. His177 functions as the Proton acceptor in the catalytic mechanism. Met227 contacts NAD(+).

This sequence belongs to the LDH/MDH superfamily. MDH type 1 family. In terms of assembly, homodimer.

The enzyme catalyses (S)-malate + NAD(+) = oxaloacetate + NADH + H(+). Its function is as follows. Catalyzes the reversible oxidation of malate to oxaloacetate. The chain is Malate dehydrogenase from Pseudoalteromonas atlantica (strain T6c / ATCC BAA-1087).